Consider the following 315-residue polypeptide: Porphobilinogen deaminase (315 aa).

C238 bears the S-(dipyrrolylmethanemethyl)cysteine mark.

The protein belongs to the HMBS family. As to quaternary structure, monomer. The cofactor is dipyrromethane.

It catalyses the reaction 4 porphobilinogen + H2O = hydroxymethylbilane + 4 NH4(+). It functions in the pathway porphyrin-containing compound metabolism; protoporphyrin-IX biosynthesis; coproporphyrinogen-III from 5-aminolevulinate: step 2/4. Its function is as follows. Tetrapolymerization of the monopyrrole PBG into the hydroxymethylbilane pre-uroporphyrinogen in several discrete steps. The sequence is that of Porphobilinogen deaminase from Albidiferax ferrireducens (strain ATCC BAA-621 / DSM 15236 / T118) (Rhodoferax ferrireducens).